Reading from the N-terminus, the 328-residue chain is Nucleotide-binding protein BL0705 (328 aa).

Positions 1–35 (MNQQTTNRDTGEAAATNAPANSATSTSTPDNQPTP) are disordered. Residues 13 to 29 (AAATNAPANSATSTSTP) are compositionally biased toward low complexity. Residue 46–53 (GMSGAGRS) participates in ATP binding. Position 101–104 (101–104 (DVRS)) interacts with GTP.

Belongs to the RapZ-like family.

Its function is as follows. Displays ATPase and GTPase activities. The polypeptide is Nucleotide-binding protein BL0705 (Bifidobacterium longum (strain NCC 2705)).